The following is a 115-amino-acid chain: Large ribosomal subunit protein uL18 (115 aa).

The interval 1-20 (MKYTKQEARKRRHYRVRSKV) is disordered. Over residues 8–18 (ARKRRHYRVRS) the composition is skewed to basic residues.

The protein belongs to the universal ribosomal protein uL18 family. As to quaternary structure, part of the 50S ribosomal subunit; part of the 5S rRNA/L5/L18/L25 subcomplex. Contacts the 5S and 23S rRNAs.

In terms of biological role, this is one of the proteins that bind and probably mediate the attachment of the 5S RNA into the large ribosomal subunit, where it forms part of the central protuberance. In Mesoplasma florum (strain ATCC 33453 / NBRC 100688 / NCTC 11704 / L1) (Acholeplasma florum), this protein is Large ribosomal subunit protein uL18.